The chain runs to 510 residues: Light-independent protochlorophyllide reductase subunit B (510 aa).

Residue Asp36 coordinates [4Fe-4S] cluster. Asp297 (proton donor) is an active-site residue. Residue 432-433 participates in substrate binding; the sequence is GM.

Belongs to the ChlB/BchB/BchZ family. Protochlorophyllide reductase is composed of three subunits; ChlL, ChlN and ChlB. Forms a heterotetramer of two ChlB and two ChlN subunits. [4Fe-4S] cluster serves as cofactor.

Its subcellular location is the plastid. The protein localises to the chloroplast. It carries out the reaction chlorophyllide a + oxidized 2[4Fe-4S]-[ferredoxin] + 2 ADP + 2 phosphate = protochlorophyllide a + reduced 2[4Fe-4S]-[ferredoxin] + 2 ATP + 2 H2O. Its pathway is porphyrin-containing compound metabolism; chlorophyll biosynthesis (light-independent). Its function is as follows. Component of the dark-operative protochlorophyllide reductase (DPOR) that uses Mg-ATP and reduced ferredoxin to reduce ring D of protochlorophyllide (Pchlide) to form chlorophyllide a (Chlide). This reaction is light-independent. The NB-protein (ChlN-ChlB) is the catalytic component of the complex. This Pinus thunbergii (Japanese black pine) protein is Light-independent protochlorophyllide reductase subunit B.